Here is a 300-residue protein sequence, read N- to C-terminus: Glutamyl-Q tRNA(Asp) synthetase (300 aa).

L-glutamate contacts are provided by residues 14-18 and Glu-50; that span reads RFAPT. A 'HIGH' region motif is present at residues 17–27; the sequence is PTPSGFLHFGS. The Zn(2+) site is built by Cys-106, Cys-108, Tyr-120, and Cys-124. Tyr-177 and Arg-195 together coordinate L-glutamate. The 'KMSKS' region motif lies at 233–237; sequence KLGKS. An ATP-binding site is contributed by Lys-236.

Belongs to the class-I aminoacyl-tRNA synthetase family. GluQ subfamily. It depends on Zn(2+) as a cofactor.

Catalyzes the tRNA-independent activation of glutamate in presence of ATP and the subsequent transfer of glutamate onto a tRNA(Asp). Glutamate is transferred on the 2-amino-5-(4,5-dihydroxy-2-cyclopenten-1-yl) moiety of the queuosine in the wobble position of the QUC anticodon. The sequence is that of Glutamyl-Q tRNA(Asp) synthetase from Pseudomonas putida (strain ATCC 700007 / DSM 6899 / JCM 31910 / BCRC 17059 / LMG 24140 / F1).